The chain runs to 100 residues: Cytochrome bo(3) ubiquinol oxidase subunit 4 (100 aa).

The Cytoplasmic portion of the chain corresponds to 1-9 (MLKNRYLKY). A helical transmembrane segment spans residues 10 to 32 (LFILILLSILSIMPIFAIIYRIF). The Extracellular portion of the chain corresponds to 33 to 36 (SRNY). The chain crosses the membrane as a helical span at residues 37 to 59 (LYAFIIVCLFFQILAHIKFFLNL). The Cytoplasmic segment spans residues 60–68 (DFSLEQRWK). Residues 69 to 90 (LISVIFSLVVGLIILLGSIWVI) form a helical membrane-spanning segment. Over 91–100 (KNLNNNLCIM) the chain is Extracellular.

This sequence belongs to the cytochrome c oxidase bacterial subunit 4 family. In terms of assembly, heterooctamer of two A chains, two B chains, two C chains and two D chains.

The protein resides in the cell membrane. Its function is as follows. Cytochrome bo(3) ubiquinol terminal oxidase is the component of the aerobic respiratory chain of E.coli that predominates when cells are grown at high aeration. Has proton pump activity across the membrane in addition to electron transfer, pumping 2 protons/electron. The polypeptide is Cytochrome bo(3) ubiquinol oxidase subunit 4 (cyoD) (Buchnera aphidicola subsp. Baizongia pistaciae (strain Bp)).